Reading from the N-terminus, the 366-residue chain is Purple acid phosphatase 3 (366 aa).

An N-terminal signal peptide occupies residues 1–32 (MTYIYRDTKITTKSTIPFLIFFLFCFSNLSMA). A Fe cation-binding site is contributed by D81. A glycan (N-linked (GlcNAc...) asparagine) is linked at N89. Residues D114 and Y117 each coordinate Fe cation. D114 contributes to the Zn(2+) binding site. 2 residues coordinate Zn(2+): N152 and H246. Residue H255 is the Proton donor of the active site. H281 provides a ligand contact to Zn(2+). 281 to 283 (HDH) provides a ligand contact to substrate. A Fe cation-binding site is contributed by H283.

This sequence belongs to the metallophosphoesterase superfamily. Purple acid phosphatase family. In terms of assembly, homodimer. Fe cation serves as cofactor. Zn(2+) is required as a cofactor. In terms of tissue distribution, expressed in stems, leaves, flowers and siliques.

The protein localises to the secreted. It carries out the reaction a phosphate monoester + H2O = an alcohol + phosphate. The polypeptide is Purple acid phosphatase 3 (PAP3) (Arabidopsis thaliana (Mouse-ear cress)).